The sequence spans 370 residues: tRNA-specific 2-thiouridylase MnmA (370 aa).

ATP is bound by residues 11-18 (AMSGGVDS) and M37. The interaction with target base in tRNA stretch occupies residues 99 to 101 (NPD). Residue C104 is the Nucleophile of the active site. C104 and C201 are joined by a disulfide. Position 129 (G129) interacts with ATP. Residues 151-153 (KDQ) are interaction with tRNA. Catalysis depends on C201, which acts as the Cysteine persulfide intermediate. The tract at residues 313 to 314 (RY) is interaction with tRNA.

This sequence belongs to the MnmA/TRMU family. Interacts with TusE.

Its subcellular location is the cytoplasm. The enzyme catalyses S-sulfanyl-L-cysteinyl-[protein] + uridine(34) in tRNA + AH2 + ATP = 2-thiouridine(34) in tRNA + L-cysteinyl-[protein] + A + AMP + diphosphate + H(+). Functionally, catalyzes the 2-thiolation of uridine at the wobble position (U34) of tRNA(Lys), tRNA(Glu) and tRNA(Gln), leading to the formation of s(2)U34, the first step of tRNA-mnm(5)s(2)U34 synthesis. Sulfur is provided by IscS, via a sulfur-relay system. Binds ATP and its substrate tRNAs. In Buchnera aphidicola subsp. Baizongia pistaciae (strain Bp), this protein is tRNA-specific 2-thiouridylase MnmA.